Reading from the N-terminus, the 687-residue chain is MGNGERPPARRPDSSGSPPPAADAPAASNHPFSSHDTKHMTSRRLASRTAVAASLSALMLAACGGDDSANAPTAGGAAPLTPAVASPAGPTGSTPGSTPGATTAPAPSSTSAGQLSVDKMAFAQTHVVPSGGLSWTLPNASASLRPISRRDALVLVAIGQADAVQPVLEAWKDGAKLGALALSPPSALPPTESGGRAYANDRWSAVVPAAWMVPGVSFSVSASNYTSSVAQAPVFGTDADVQLTILPFYLFGADDTNSPPLSTTQAPDAATQQEIFAKWPTAELKVRTHPAGRFSLATVVVGPRADRTGAAQPAYPVTALDQQKDGYGVMSAMLTLITNMRTANGDGPLNDQYYAPLIALNSNGQFANLGGGLGGVGSGAAVGDHRYTGIFIHEQGHAFGLNHAGDEYAKGAYPYAGGSLSGSVWGYDPNHREFLDVLVPTTASSYAKCASSHQLDAQGRCYKQDPMQGGAGDQSSGYKFATFSDYNTGRMQAWIASRVLADPASSTGYSKWDSAAQARAPYTPTTDNNGLYGVNQNLPVQAGVPVHTIVVSFSKAGSAGASYIYPPFSYTGNLIATFDPTSAADRQAITVDKGTYPWYCKGTGCDYTLRVTYADGSQTYRVLQGGFRAWWTPTVDDANATNPLSGSSFRVWAINVPGDKRIGKIELLDTPMVWNGMPANPTVLLSR.

Disordered stretches follow at residues 1 to 45 (MGNG…SRRL) and 73 to 112 (TAGGAAPLTPAVASPAGPTGSTPGSTPGATTAPAPSSTSA). The Peptidase M66 domain occupies 233 to 501 (PVFGTDADVQ…QAWIASRVLA (269 aa)). H393 contacts Zn(2+). E394 is an active-site residue. 2 residues coordinate Zn(2+): H397 and H403.

Belongs to the dictomallein family. It depends on Zn(2+) as a cofactor.

In Burkholderia pseudomallei (strain 668), this protein is Dictomallein (dtmL).